The chain runs to 447 residues: Ribosomal protein uS12 methylthiotransferase RimO (447 aa).

The MTTase N-terminal domain maps to 15–125 (PRVGFVSLGC…VMQAIHRHLP (111 aa)). [4Fe-4S] cluster-binding residues include Cys24, Cys60, Cys89, Cys156, Cys160, and Cys163. One can recognise a Radical SAM core domain in the interval 142 to 379 (LTPKHYAYLK…MQWQEEISKK (238 aa)). Residues 379-447 (KRLAGKKGRI…GIHDLWAKKI (69 aa)) enclose the TRAM domain.

The protein belongs to the methylthiotransferase family. RimO subfamily. [4Fe-4S] cluster is required as a cofactor.

It localises to the cytoplasm. The enzyme catalyses L-aspartate(89)-[ribosomal protein uS12]-hydrogen + (sulfur carrier)-SH + AH2 + 2 S-adenosyl-L-methionine = 3-methylsulfanyl-L-aspartate(89)-[ribosomal protein uS12]-hydrogen + (sulfur carrier)-H + 5'-deoxyadenosine + L-methionine + A + S-adenosyl-L-homocysteine + 2 H(+). Functionally, catalyzes the methylthiolation of an aspartic acid residue of ribosomal protein uS12. This is Ribosomal protein uS12 methylthiotransferase RimO from Nitrosomonas europaea (strain ATCC 19718 / CIP 103999 / KCTC 2705 / NBRC 14298).